The sequence spans 149 residues: Probable glycine-rich RNA-binding protein 1 (149 aa).

The RRM domain occupies 8–83; that stretch reads YRCFVGGLAW…LDGRNITAQA (76 aa). Positions 80–149 are disordered; the sequence is TAQARGSGTR…GRSEGGSWRN (70 aa). Gly residues-rich tracts occupy residues 87 to 101, 110 to 123, and 131 to 143; these read GTRGGMVGGYGSGGY, YNRGGGGGYGGGYG, and YGDGGYGGQGRSE.

Belongs to the GR-RBP family.

Functionally, possibly has a role in RNA transcription or processing during stress. The polypeptide is Probable glycine-rich RNA-binding protein 1 (RBG1) (Arabidopsis thaliana (Mouse-ear cress)).